The chain runs to 221 residues: Iron-sulfur cluster repair protein YtfE (221 aa).

The protein belongs to the RIC family. YtfE subfamily. In terms of assembly, homodimer.

It localises to the cytoplasm. Its function is as follows. Di-iron-containing protein involved in the repair of iron-sulfur clusters damaged by oxidative and nitrosative stress conditions. This chain is Iron-sulfur cluster repair protein YtfE, found in Pectobacterium atrosepticum (strain SCRI 1043 / ATCC BAA-672) (Erwinia carotovora subsp. atroseptica).